The primary structure comprises 142 residues: Transcriptional regulator MraZ (142 aa).

2 SpoVT-AbrB domains span residues 5 to 47 and 76 to 119; these read THTP…PTPE and AHDE…DRVA.

The protein belongs to the MraZ family. In terms of assembly, forms oligomers.

Its subcellular location is the cytoplasm. The protein resides in the nucleoid. The protein is Transcriptional regulator MraZ of Salinispora tropica (strain ATCC BAA-916 / DSM 44818 / JCM 13857 / NBRC 105044 / CNB-440).